The primary structure comprises 82 residues: Protein C14 (82 aa).

This chain is Protein C14, found in Homo sapiens (Human).